The sequence spans 333 residues: Putative F-box protein At4g11580 (333 aa).

The F-box domain occupies 11–58; sequence VSEWADLNKDILELIFNKLDVMDITMGASRVCISWFLASHNKTLWNTV.

The polypeptide is Putative F-box protein At4g11580 (Arabidopsis thaliana (Mouse-ear cress)).